Reading from the N-terminus, the 1043-residue chain is F-box DNA helicase 1 (1043 aa).

The segment at Gln-30–Ser-56 is disordered. A PIP-box motif is present at residues Gln-57–Phe-64. Positions Cys-101 to Pro-191 are disordered. A Phosphoserine modification is found at Ser-124. The F-box domain maps to Ser-138–Ala-184. The span at Arg-158 to Thr-170 shows a compositional bias: basic and acidic residues. A UvrD-like helicase ATP-binding domain is found at Thr-442–Gly-705. ATP is bound at residue Ala-463 to Thr-470. The APIM motif motif lies at Lys-807 to Arg-811.

Belongs to the helicase family. UvrD subfamily. Part of the SCF (SKP1-CUL1-F-box) E3 ubiquitin-protein ligase complex SCF(FBH1) composed of CUL1, SKP1, RBX1 and FBH1. Interacts with RAD51. Interacts with RPA2. Interacts (via PIP-box and RanBP2-type zinc finger) with PCNA. In terms of processing, ubiquitinated. Ubiquitination by the DCX(DTL) complex, also named CRL4(CDT2), leading to its degradation: ubiquitination takes place after its localization to DNA damage sites, possibly to facilitate the translesion synthesis (TLS) pathway.

The protein localises to the nucleus. It is found in the chromosome. It catalyses the reaction Couples ATP hydrolysis with the unwinding of duplex DNA by translocating in the 3'-5' direction.. The catalysed reaction is ATP + H2O = ADP + phosphate + H(+). It functions in the pathway protein modification; protein ubiquitination. In terms of biological role, 3'-5' DNA helicase and substrate-recognition component of the SCF(FBH1) E3 ubiquitin ligase complex that plays a key role in response to stalled/damaged replication forks. Involved in genome maintenance by acting as an anti-recombinogenic helicase and preventing extensive strand exchange during homologous recombination: promotes RAD51 filament dissolution from stalled forks, thereby inhibiting homologous recombination and preventing excessive recombination. Also promotes cell death and DNA double-strand breakage in response to replication stress: together with MUS81, promotes the endonucleolytic DNA cleavage following prolonged replication stress via its helicase activity, possibly to eliminate cells with excessive replication stress. Plays a major role in remodeling of stalled DNA forks by catalyzing fork regression, in which the fork reverses and the two nascent DNA strands anneal. In addition to the helicase activity, also acts as the substrate-recognition component of the SCF(FBH1) E3 ubiquitin ligase complex, a complex that mediates ubiquitination of RAD51, leading to regulate RAD51 subcellular location. The sequence is that of F-box DNA helicase 1 from Homo sapiens (Human).